The primary structure comprises 438 residues: C4-dicarboxylate transport protein 1 (438 aa).

8 helical membrane-spanning segments follow: residues 20–42 (LYVQ…PSVA), 57–77 (LIKM…IAHI), 90–112 (ALFY…GNLV), 160–179 (VLQV…ALGK), 192–214 (AHAV…FGAM), 229–251 (LIGL…LGLI), 324–346 (LFIA…LLVA), and 361–383 (FITL…AIVF).

Belongs to the dicarboxylate/amino acid:cation symporter (DAACS) (TC 2.A.23) family.

The protein resides in the cell inner membrane. Its function is as follows. Responsible for the transport of dicarboxylates such as succinate, fumarate, and malate from the periplasm across the membrane. This is C4-dicarboxylate transport protein 1 from Bradyrhizobium diazoefficiens (strain JCM 10833 / BCRC 13528 / IAM 13628 / NBRC 14792 / USDA 110).